The sequence spans 670 residues: Outer dynein arm-docking complex subunit 1 (670 aa).

3 coiled-coil regions span residues 9–155 (SKEV…RYLN), 183–224 (AVRE…EQLH), and 302–381 (NFIN…IQLL). The tract at residues 454–473 (KMAPLQPPDTLEDPPGFEAS) is disordered. S517 carries the phosphoserine modification. 2 disordered regions span residues 526 to 596 (AGSS…ASSG) and 616 to 670 (VGSS…DSRG). The span at 584–596 (GHVTFGSTSASSG) shows a compositional bias: polar residues. Residues 650–670 (SSTGPASSTGPGSSTSKDSRG) show a composition bias toward low complexity.

The protein belongs to the ODA1/DCC2 family. In terms of assembly, component of the outer dynein arm-docking complex along with ODAD2, ODAD3, ODAD4 and CLXN. Interacts with ODAD3. Interacts with ODAD4; this interaction may facilitate the recruitment and/or attachment of outer dynein arm docking complex proteins, including ODAD1, ODAD3, and ODAD4 to ciliary axonemes. Interacts with DNAH9. Interacts with MNS1. Interacts with PIERCE1 and PIERCE2; the interactions link the outer dynein arms docking complex (ODA-DC) to the internal microtubule inner proteins (MIP) in cilium axoneme. In terms of tissue distribution, expressed in nasal epithelial cells. Highly expressed in testis and also detected in lung, brain and kidney.

It is found in the cytoplasm. The protein resides in the cytoskeleton. It localises to the cilium axoneme. In terms of biological role, component of the outer dynein arm-docking complex (ODA-DC) that mediates outer dynein arms (ODA) binding onto the doublet microtubule. Involved in mediating assembly of both ODAs and their axonemal docking complex onto ciliary microtubules. This Homo sapiens (Human) protein is Outer dynein arm-docking complex subunit 1.